The following is a 467-amino-acid chain: Light-independent protochlorophyllide reductase subunit N (467 aa).

Residues cysteine 22, cysteine 47, and cysteine 107 each contribute to the [4Fe-4S] cluster site.

Belongs to the BchN/ChlN family. As to quaternary structure, protochlorophyllide reductase is composed of three subunits; ChlL, ChlN and ChlB. Forms a heterotetramer of two ChlB and two ChlN subunits. [4Fe-4S] cluster serves as cofactor.

It localises to the plastid. Its subcellular location is the chloroplast. It catalyses the reaction chlorophyllide a + oxidized 2[4Fe-4S]-[ferredoxin] + 2 ADP + 2 phosphate = protochlorophyllide a + reduced 2[4Fe-4S]-[ferredoxin] + 2 ATP + 2 H2O. It participates in porphyrin-containing compound metabolism; chlorophyll biosynthesis (light-independent). Component of the dark-operative protochlorophyllide reductase (DPOR) that uses Mg-ATP and reduced ferredoxin to reduce ring D of protochlorophyllide (Pchlide) to form chlorophyllide a (Chlide). This reaction is light-independent. The NB-protein (ChlN-ChlB) is the catalytic component of the complex. This Pinus thunbergii (Japanese black pine) protein is Light-independent protochlorophyllide reductase subunit N.